The following is a 466-amino-acid chain: 3-isopropylmalate dehydratase large subunit (466 aa).

Cysteine 347, cysteine 407, and cysteine 410 together coordinate [4Fe-4S] cluster.

This sequence belongs to the aconitase/IPM isomerase family. LeuC type 1 subfamily. In terms of assembly, heterodimer of LeuC and LeuD. [4Fe-4S] cluster serves as cofactor.

The catalysed reaction is (2R,3S)-3-isopropylmalate = (2S)-2-isopropylmalate. It functions in the pathway amino-acid biosynthesis; L-leucine biosynthesis; L-leucine from 3-methyl-2-oxobutanoate: step 2/4. Its function is as follows. Catalyzes the isomerization between 2-isopropylmalate and 3-isopropylmalate, via the formation of 2-isopropylmaleate. The chain is 3-isopropylmalate dehydratase large subunit from Citrobacter koseri (strain ATCC BAA-895 / CDC 4225-83 / SGSC4696).